The primary structure comprises 409 residues: FBD-associated F-box protein At4g10400 (409 aa).

In terms of domain architecture, F-box spans 1-47; it reads MDRISGLPDEVLVKILSFVPTKVAVSTSILSKRWEFLWMWLTKLKFG. The region spanning 330 to 379 is the FBD domain; sequence SWNQPSIVPECMLSSLQKFTWFKYLGRPQDRDIAVYILKNACRLRTATIK.

The chain is FBD-associated F-box protein At4g10400 from Arabidopsis thaliana (Mouse-ear cress).